The sequence spans 209 residues: dTTP/UTP pyrophosphatase (209 aa).

Residue D79 is the Proton acceptor of the active site.

The protein belongs to the Maf family. YhdE subfamily. It depends on a divalent metal cation as a cofactor.

The protein resides in the cytoplasm. It carries out the reaction dTTP + H2O = dTMP + diphosphate + H(+). The catalysed reaction is UTP + H2O = UMP + diphosphate + H(+). Functionally, nucleoside triphosphate pyrophosphatase that hydrolyzes dTTP and UTP. May have a dual role in cell division arrest and in preventing the incorporation of modified nucleotides into cellular nucleic acids. The chain is dTTP/UTP pyrophosphatase from Chelativorans sp. (strain BNC1).